The sequence spans 254 residues: Triosephosphate isomerase (254 aa).

12–14 (NWK) is a binding site for substrate. Histidine 99 (electrophile) is an active-site residue. Glutamate 169 functions as the Proton acceptor in the catalytic mechanism. Substrate contacts are provided by residues glycine 175, serine 214, and 235-236 (GG).

This sequence belongs to the triosephosphate isomerase family. In terms of assembly, homodimer.

It is found in the cytoplasm. It carries out the reaction D-glyceraldehyde 3-phosphate = dihydroxyacetone phosphate. Its pathway is carbohydrate biosynthesis; gluconeogenesis. The protein operates within carbohydrate degradation; glycolysis; D-glyceraldehyde 3-phosphate from glycerone phosphate: step 1/1. In terms of biological role, involved in the gluconeogenesis. Catalyzes stereospecifically the conversion of dihydroxyacetone phosphate (DHAP) to D-glyceraldehyde-3-phosphate (G3P). The protein is Triosephosphate isomerase of Bartonella quintana (strain Toulouse) (Rochalimaea quintana).